The following is a 596-amino-acid chain: Beta-fructofuranosidase, insoluble isoenzyme 6 (596 aa).

Positions 1–25 (MALAGLPLSVFAIAVHFCLVFSSSS) are cleaved as a signal peptide. Residues 49 to 52 (WQND), glutamine 68, and tryptophan 76 contribute to the substrate site. The active site involves aspartate 52. Asparagine 80 carries an N-linked (GlcNAc...) asparagine glycan. Residues 113-114 (AS), 177-178 (RD), and glutamate 232 each bind substrate. N-linked (GlcNAc...) asparagine glycosylation is present at asparagine 335. Residues cysteine 436 and cysteine 482 are joined by a disulfide bond. A glycan (N-linked (GlcNAc...) asparagine) is linked at asparagine 556.

This sequence belongs to the glycosyl hydrolase 32 family. As to expression, expressed in roots. Weakly expressed in flowers.

It localises to the secreted. The protein resides in the extracellular space. Its subcellular location is the apoplast. It is found in the cell wall. The enzyme catalyses Hydrolysis of terminal non-reducing beta-D-fructofuranoside residues in beta-D-fructofuranosides.. The sequence is that of Beta-fructofuranosidase, insoluble isoenzyme 6 (CIN6) from Oryza sativa subsp. japonica (Rice).